Here is a 232-residue protein sequence, read N- to C-terminus: Small ribosomal subunit protein uS3 (232 aa).

A KH type-2 domain is found at 39–107 (IRKFLKKELF…DVAINIKEEK (69 aa)). Positions 213-232 (QPEPAEEKKGGRRPSRKRGE) are disordered. Positions 222 to 232 (GGRRPSRKRGE) are enriched in basic residues.

The protein belongs to the universal ribosomal protein uS3 family. In terms of assembly, part of the 30S ribosomal subunit. Forms a tight complex with proteins S10 and S14.

Its function is as follows. Binds the lower part of the 30S subunit head. Binds mRNA in the 70S ribosome, positioning it for translation. The chain is Small ribosomal subunit protein uS3 from Sulfurovum sp. (strain NBC37-1).